Reading from the N-terminus, the 1143-residue chain is Disease resistance protein Pik-1 (1143 aa).

The structured coiled coil (CC) domain stretch occupies residues 1–190; the sequence is MEAAAMAVTA…PLRIMGGEMQ (190 aa). Positions 189–258 constitute an HMA domain; the sequence is MQKIVFKIPM…KVGHAELLQV (70 aa). The interval 191–264 is HMA-like domain; it reads KIVFKIPMVD…LLQVSQVKED (74 aa). The region spanning 282 to 570 is the NB-ARC domain; it reads HEVKTICILG…WIAEGFVSEE (289 aa). LRR repeat units lie at residues 681–706, 708–731, 732–754, 756–777, 778–800, 802–823, 824–848, 945–968, 979–1002, and 1004–1027; these read FKRL…ICEQ, SLRV…MRKL, KHLE…IGEL, HLRI…IREL, QHLH…VGKL, NLKI…IGEL, NHLQ…QISQ, MPNL…INGT, DSRL…EFKF, and AGPA…VFRC.

This sequence belongs to the disease resistance NB-LRR family. As to quaternary structure, interacts with AVR-Pik through its N-terminal part containing the HMA-like domain.

Functionally, disease resistance (R) protein that specifically recognizes the AVR-Pik effector avirulence protein from M.oryzae. Resistance proteins guard the plant against pathogens that contain an appropriate avirulence protein via an indirect interaction with this avirulence protein. That triggers a defense system including the hypersensitive response, which restricts the pathogen growth. Contribution of Pik-2 is required to recognize the effector avirulence protein AVR-Pik. In Oryza sativa subsp. japonica (Rice), this protein is Disease resistance protein Pik-1.